We begin with the raw amino-acid sequence, 384 residues long: MASLRKTHPILKIVNDALIDLPAPSNISFWWNYGSLLFLCLIIQIATGLFLAMHYTSDITTAFSSVAHICRDVNYGWLIRNMHANGASFFFICLYLHIGRGLYYGSYLNKETWNVGVILFLLVMMTAFVGYVLPWGQMSFWGATVITNLLSAVPYVGNALVQWIWGGFSVDNATLTRFFAFHFLFPFVIAAAAVIHLLFLHETGSNNPAGVNSNADKISFHPYFSYKDLLGFALMLLALTSLALFTPNLLGDPDNFIPANPLVTPPHIKPEWYFLFAYAILRSIPNKLGGVLALLFSILVLMVVPILHTSVQRGLTFRPLSQMLFWTLVADVLILTWIGGMPVEHPFIIIGQVASVLYFMLFLVLMPLVSWLENKALRKPIELA.

A run of 4 helical transmembrane segments spans residues 33–53 (YGSL…FLAM), 77–98 (WLIR…YLHI), 113–133 (WNVG…GYVL), and 178–198 (FFAF…IHLL). Residues histidine 83 and histidine 97 each contribute to the heme b site. Residues histidine 182 and histidine 196 each coordinate heme b. Histidine 201 is a binding site for a ubiquinone. 4 consecutive transmembrane segments (helical) span residues 226–246 (YKDL…ALFT), 288–308 (LGGV…PILH), 320–340 (LSQM…WIGG), and 347–367 (FIII…VLMP).

The protein belongs to the cytochrome b family. The cytochrome bc1 complex contains 3 respiratory subunits (MT-CYB, CYC1 and UQCRFS1), 2 core proteins (UQCRC1 and UQCRC2) and probably 6 low-molecular weight proteins. Heme b is required as a cofactor.

The protein resides in the mitochondrion inner membrane. Component of the ubiquinol-cytochrome c reductase complex (complex III or cytochrome b-c1 complex) that is part of the mitochondrial respiratory chain. The b-c1 complex mediates electron transfer from ubiquinol to cytochrome c. Contributes to the generation of a proton gradient across the mitochondrial membrane that is then used for ATP synthesis. In Anoplogaster cornuta (Common fangtooth), this protein is Cytochrome b (mt-cyb).